A 635-amino-acid chain; its full sequence is Threonine--tRNA ligase (635 aa).

Residues 1–61 (MVSIRLPDGS…DHDVALAIVT (61 aa)) enclose the TGS domain. The segment at 242–533 (DHRKLGKQLD…LIEHHAGAMP (292 aa)) is catalytic. Positions 333, 384, and 510 each coordinate Zn(2+).

This sequence belongs to the class-II aminoacyl-tRNA synthetase family. As to quaternary structure, homodimer. It depends on Zn(2+) as a cofactor.

It is found in the cytoplasm. The catalysed reaction is tRNA(Thr) + L-threonine + ATP = L-threonyl-tRNA(Thr) + AMP + diphosphate + H(+). Catalyzes the attachment of threonine to tRNA(Thr) in a two-step reaction: L-threonine is first activated by ATP to form Thr-AMP and then transferred to the acceptor end of tRNA(Thr). Also edits incorrectly charged L-seryl-tRNA(Thr). In Paraburkholderia phytofirmans (strain DSM 17436 / LMG 22146 / PsJN) (Burkholderia phytofirmans), this protein is Threonine--tRNA ligase.